A 665-amino-acid chain; its full sequence is Methionine--tRNA ligase (665 aa).

A 'HIGH' region motif is present at residues 13 to 23 (YYPSGKLHIGS). The short motif at 309-313 (KMSKS) is the 'KMSKS' region element. K312 provides a ligand contact to ATP. Residues 562–665 (DFDKVEIRVA…PAVPNGSVIG (104 aa)) enclose the tRNA-binding domain.

The protein belongs to the class-I aminoacyl-tRNA synthetase family. MetG type 2B subfamily. As to quaternary structure, homodimer.

It localises to the cytoplasm. It catalyses the reaction tRNA(Met) + L-methionine + ATP = L-methionyl-tRNA(Met) + AMP + diphosphate. In terms of biological role, is required not only for elongation of protein synthesis but also for the initiation of all mRNA translation through initiator tRNA(fMet) aminoacylation. This Streptococcus pneumoniae serotype 4 (strain ATCC BAA-334 / TIGR4) protein is Methionine--tRNA ligase (metG).